Here is a 76-residue protein sequence, read N- to C-terminus: uncharacterized protein (76 aa).

Residues 18–38 traverse the membrane as a helical segment; sequence FISALFFFNAVCIVSDNLLII.

It is found in the cell membrane. This is an uncharacterized protein from Escherichia coli O6:H1 (strain CFT073 / ATCC 700928 / UPEC).